The sequence spans 341 residues: S-adenosylmethionine:tRNA ribosyltransferase-isomerase (341 aa).

This sequence belongs to the QueA family. In terms of assembly, monomer.

The protein localises to the cytoplasm. It catalyses the reaction 7-aminomethyl-7-carbaguanosine(34) in tRNA + S-adenosyl-L-methionine = epoxyqueuosine(34) in tRNA + adenine + L-methionine + 2 H(+). The protein operates within tRNA modification; tRNA-queuosine biosynthesis. Transfers and isomerizes the ribose moiety from AdoMet to the 7-aminomethyl group of 7-deazaguanine (preQ1-tRNA) to give epoxyqueuosine (oQ-tRNA). This chain is S-adenosylmethionine:tRNA ribosyltransferase-isomerase, found in Clostridium tetani (strain Massachusetts / E88).